The primary structure comprises 333 residues: MVRIATYASHSALQILKGAKDEGFGTIAFGKPRVKLLYTKYFPVADYFLEGDYPEDKLLELDAVVIPTGSFIAHLGVELVEKMRVPYFGNKEVLKWESDRSLERKWLEKAKLTLPRIYEDPDDIDRPVIVKPHGAKGGRGYFIAKSSKDFWEKAEKFLGIRSKEDLKNVQIQEYVVGVPIYPHYFYSKITGELELMSIDRRYESNVDAIGRIPSREQLDLDLDVTYTVVGNIPLVLRESLLMDVIEAGERVVKASEELMGGLWGPFCLEGVFTPDMEFVVFEISARIVAGTNLFINGSPYTWLKYDEPMSTGRRIAREIKIAIEEGKLEEVVT.

5-amino-1-(5-phospho-beta-D-ribosyl)imidazole-4-carboxamide-binding residues include histidine 10 and serine 70. Positions 91–324 (KEVLKWESDR…IAREIKIAIE (234 aa)) constitute an ATP-grasp domain. ATP-binding positions include 121-181 (PDDI…VPIY) and glutamate 203. A 5-amino-1-(5-phospho-beta-D-ribosyl)imidazole-4-carboxamide-binding site is contributed by asparagine 231. 2 residues coordinate Mg(2+): glutamate 269 and glutamate 282.

This sequence belongs to the phosphohexose mutase family. It depends on Mg(2+) as a cofactor. Mn(2+) serves as cofactor.

It carries out the reaction 5-amino-1-(5-phospho-beta-D-ribosyl)imidazole-4-carboxamide + formate + ATP = 5-formamido-1-(5-phospho-D-ribosyl)imidazole-4-carboxamide + ADP + phosphate. Its pathway is purine metabolism; IMP biosynthesis via de novo pathway; 5-formamido-1-(5-phospho-D-ribosyl)imidazole-4-carboxamide from 5-amino-1-(5-phospho-D-ribosyl)imidazole-4-carboxamide (formate route): step 1/1. Functionally, catalyzes the ATP- and formate-dependent formylation of 5-aminoimidazole-4-carboxamide-1-beta-d-ribofuranosyl 5'-monophosphate (AICAR) to 5-formaminoimidazole-4-carboxamide-1-beta-d-ribofuranosyl 5'-monophosphate (FAICAR) in the absence of folates. This Pyrococcus horikoshii (strain ATCC 700860 / DSM 12428 / JCM 9974 / NBRC 100139 / OT-3) protein is 5-formaminoimidazole-4-carboxamide-1-(beta)-D-ribofuranosyl 5'-monophosphate synthetase.